We begin with the raw amino-acid sequence, 413 residues long: 2,3-bisphosphoglycerate-independent phosphoglycerate mutase (413 aa).

It belongs to the BPG-independent phosphoglycerate mutase family. A-PGAM subfamily.

It catalyses the reaction (2R)-2-phosphoglycerate = (2R)-3-phosphoglycerate. Its pathway is carbohydrate degradation; glycolysis; pyruvate from D-glyceraldehyde 3-phosphate: step 3/5. In terms of biological role, catalyzes the interconversion of 2-phosphoglycerate and 3-phosphoglycerate. The sequence is that of 2,3-bisphosphoglycerate-independent phosphoglycerate mutase from Sulfurisphaera tokodaii (strain DSM 16993 / JCM 10545 / NBRC 100140 / 7) (Sulfolobus tokodaii).